The chain runs to 460 residues: Serine--tRNA ligase (460 aa).

242 to 244 lines the L-serine pocket; sequence TAE. Residues 273–275 and valine 289 contribute to the ATP site; that span reads RRE. Glutamate 296 is an L-serine binding site. ATP is bound at residue 369–372; it reads EVSS. Serine 405 provides a ligand contact to L-serine.

The protein belongs to the class-II aminoacyl-tRNA synthetase family. Type-1 seryl-tRNA synthetase subfamily. In terms of assembly, homodimer. The tRNA molecule binds across the dimer.

It is found in the cytoplasm. The catalysed reaction is tRNA(Ser) + L-serine + ATP = L-seryl-tRNA(Ser) + AMP + diphosphate + H(+). It carries out the reaction tRNA(Sec) + L-serine + ATP = L-seryl-tRNA(Sec) + AMP + diphosphate + H(+). It participates in aminoacyl-tRNA biosynthesis; selenocysteinyl-tRNA(Sec) biosynthesis; L-seryl-tRNA(Sec) from L-serine and tRNA(Sec): step 1/1. In terms of biological role, catalyzes the attachment of serine to tRNA(Ser). Is also able to aminoacylate tRNA(Sec) with serine, to form the misacylated tRNA L-seryl-tRNA(Sec), which will be further converted into selenocysteinyl-tRNA(Sec). This chain is Serine--tRNA ligase, found in Haloquadratum walsbyi (strain DSM 16790 / HBSQ001).